Here is a 381-residue protein sequence, read N- to C-terminus: Endophilin-A homolog (381 aa).

A membrane-binding amphipathic helix region spans residues 1-21; the sequence is MSLSGLRKQFNKANQYLSETM. Residues 18 to 247 enclose the BAR domain; sequence SETMGAAEPT…LGHRIKDAAA (230 aa). A coiled-coil region spans residues 170–238; the sequence is CKKRQQRRDD…QCLENLQQQL (69 aa). The disordered stretch occupies residues 246-323; sequence AARPREEHVP…PPPLSQQQKP (78 aa). Over residues 260–271 the composition is skewed to polar residues; sequence ANESRTPRSSFR. Pro residues predominate over residues 305–317; sequence YQGPPPGGLPPPL. The 60-residue stretch at 320-379 folds into the SH3 domain; the sequence is QQKPQCRALFDFDAQSEGELDFKEGTLIELVSQIDENWYEGRVNGKTGLFPVTYVQVLVP.

The protein belongs to the endophilin family. In terms of assembly, may form a homodimer (via the BAR domain). In terms of tissue distribution, expressed in neurons and posterior intestine.

The protein localises to the synapse. The protein resides in the cytoplasmic vesicle. Its subcellular location is the secretory vesicle. It is found in the synaptic vesicle. It localises to the membrane. In terms of biological role, involved in synaptic vesicle (SV) recycling in neurons probably by regulating clathrin-mediated endocytosis. By controlling SV endocytosis, regulates the rate of excitatory postsynaptic currents (EPSCs) at neuromuscular junctions and thus locomotion. In a similar manner, involved in necrotic neuronal cell death induced by abnormal hyperactivation of ion channels. Plays a minor role in responses to mechanical stimuli. Plays a minor role in unc-26/synaptojanin localization to synapses. This chain is Endophilin-A homolog, found in Caenorhabditis elegans.